The sequence spans 200 residues: Cysteine dioxygenase type 1 (200 aa).

Positions 86, 88, and 140 each coordinate Fe cation. Positions 93 to 157 form a cross-link, 3'-(S-cysteinyl)-tyrosine (Cys-Tyr); that stretch reads CFLKMLQGNL…TEPAVSLHLY (65 aa).

Belongs to the cysteine dioxygenase family. As to quaternary structure, monomer. Fe(2+) is required as a cofactor. The cofactor is Ni(2+). It depends on Zn(2+) as a cofactor. In terms of processing, the thioether cross-link between Cys-93 and Tyr-157 plays a structural role through stabilizing the Fe(2+) ion, and prevents the production of highly damaging free hydroxyl radicals by holding the oxygen radical via hydroxyl hydrogen. Highly expressed in liver and placenta. Low expression in heart, brain and pancreas. Also detected in hepatoblastoma Hep-G2 cells.

It carries out the reaction L-cysteine + O2 = 3-sulfino-L-alanine + H(+). It participates in organosulfur biosynthesis; taurine biosynthesis; hypotaurine from L-cysteine: step 1/2. Catalyzes the oxidation of cysteine to cysteine sulfinic acid with addition of molecular dioxygen. The chain is Cysteine dioxygenase type 1 (CDO1) from Homo sapiens (Human).